The primary structure comprises 660 residues: Pentatricopeptide repeat-containing protein At1g03560, mitochondrial (660 aa).

The N-terminal 12 residues, 1-12 (MRRFYRKPFSVP), are a transit peptide targeting the mitochondrion. PPR repeat units lie at residues 151 to 185 (NLEC…EFPM), 186 to 220 (TVSA…GIEP), 221 to 255 (TLYT…RIKP), 256 to 290 (DIVT…GHEA), 291 to 325 (DKIT…GIQV), 326 to 360 (PPHA…GSKP), 361 to 395 (NVAI…GFKP), 396 to 430 (DVVT…GLAI), 431 to 465 (NSMF…GCTR), 466 to 496 (DSYC…MEEE), 502 to 536 (TVYT…GITP), 537 to 571 (TAAC…GVIL), 574 to 605 (ACED…GREV), and 606 to 640 (PGRI…GYER).

The protein belongs to the PPR family. P subfamily.

It localises to the mitochondrion. The sequence is that of Pentatricopeptide repeat-containing protein At1g03560, mitochondrial from Arabidopsis thaliana (Mouse-ear cress).